Consider the following 881-residue polypeptide: Nitrate reductase [NADH] 1 (881 aa).

Positions 1 to 46 are disordered; sequence MAASVEHRPFTSHQHGVVRSFKSYPDVPRPKKLPLPQPLSDSTNDN. Position 167 (Cys-167) interacts with Mo-molybdopterin. The region spanning 515–590 is the Cytochrome b5 heme-binding domain; that stretch reads TKSYSLSEVR…LEDYRIGELM (76 aa). Positions 550 and 573 each coordinate heme. Positions 625–737 constitute an FAD-binding FR-type domain; the sequence is REKIPCKLLS…KGPLGHIEYT (113 aa). Residues 677–680, 694–698, Phe-699, Phe-706, 711–713, and Thr-764 each bind FAD; these read RAYT, VVKVY, and IMS.

It belongs to the nitrate reductase family. In terms of assembly, homodimer. It depends on FAD as a cofactor. Requires heme as cofactor. Mo-molybdopterin serves as cofactor.

The enzyme catalyses nitrite + NAD(+) + H2O = nitrate + NADH + H(+). Its function is as follows. Nitrate reductase is a key enzyme involved in the first step of nitrate assimilation in plants, fungi and bacteria. The chain is Nitrate reductase [NADH] 1 (NIA1) from Phaseolus vulgaris (Kidney bean).